The sequence spans 150 residues: MKYNRHAKILDIIENNTIETQEELAEKLKQQGMDVTQATVSRDIKELRLIKVMTPEGYYKYSAFAQSEKQVSNRLITILTEAYVSSDYANNIVVVKTLSGMAQAAGSAIDSLKWNEILGTIAGDDTLIMVCRAEKIAEDIVNKFNKMIKS.

It belongs to the ArgR family.

The protein resides in the cytoplasm. The protein operates within amino-acid biosynthesis; L-arginine biosynthesis [regulation]. Regulates arginine biosynthesis genes. The protein is Arginine repressor of Ruminiclostridium cellulolyticum (strain ATCC 35319 / DSM 5812 / JCM 6584 / H10) (Clostridium cellulolyticum).